The sequence spans 200 residues: MSDYELDPLPYEYDALEPHISEQVLTWHHDTHHQGYVNGWNAAEETLAENREAGEFGSSAGALRNVTHNGSGHILHDLFWQNMSPEGGDEPEGALAERIAEDFGSYEAWKGEFEAAAGAAGGWALLVYDSFSNQLRNVVVDKHDQGALWGSHPILALDVWEHSYYHDYGPARGDFVSAFFEVVDWDEPAARYEQAVELFE.

Residues H29, H76, D158, and H162 each contribute to the Mn(2+) site.

This sequence belongs to the iron/manganese superoxide dismutase family. Requires Mn(2+) as cofactor.

It carries out the reaction 2 superoxide + 2 H(+) = H2O2 + O2. Its function is as follows. Destroys superoxide anion radicals which are normally produced within the cells and which are toxic to biological systems. This chain is Superoxide dismutase [Mn] 1 (sod1), found in Haloferax volcanii (strain ATCC 29605 / DSM 3757 / JCM 8879 / NBRC 14742 / NCIMB 2012 / VKM B-1768 / DS2) (Halobacterium volcanii).